Consider the following 263-residue polypeptide: Coiled-coil domain-containing protein 172 (263 aa).

Residues 13–191 (TEHQAEESRR…LKVLKDEETE (179 aa)) adopt a coiled-coil conformation.

The protein belongs to the CCDC172 family. In terms of assembly, may interact with TEKT2. As to expression, detected in spermatozoa (at protein level). Predominantly expressed in testis and in spermatozoa from the caput and corpus epididymis.

It localises to the cytoplasm. It is found in the cell projection. The protein localises to the cilium. This chain is Coiled-coil domain-containing protein 172 (Ccdc172), found in Rattus norvegicus (Rat).